A 369-amino-acid polypeptide reads, in one-letter code: MIKLKQLIAATLLLSTAFGVHAERLKDIASISGVRANQLIGYGLVVGLNGTGDQTTQTPFTLQTFNNMLSQFGIKVPAGSGTVQLKNVAAVAVYADLPAFAKPGQTVDITVSSIGNSKSLRGGALLMTPMKGVDGNVYAIAQGNLVVGGFDAEGRDGSKITVNVPSSGRIPGGASVERSVPSGFNQGNTLTLNLNRSDFTTAKRIVDKINELLGPGVAQALDGGSVRVTAPLDPGQRVDYLSILENLEVDPGQTAAKVIINSRTGTIVIGQNVKVSPAAVTHGSLTVTITEDPIVSQPGALSGGQTAVVPRSRVNAQQELHPMFKFGPGTTLDEIVRAVNQVGAAPGDLMAILEALKQAGALQADLIVI.

The N-terminal stretch at methionine 1–alanine 22 is a signal peptide.

This sequence belongs to the FlgI family. In terms of assembly, the basal body constitutes a major portion of the flagellar organelle and consists of four rings (L,P,S, and M) mounted on a central rod.

The protein localises to the periplasm. It localises to the bacterial flagellum basal body. In terms of biological role, assembles around the rod to form the L-ring and probably protects the motor/basal body from shearing forces during rotation. The polypeptide is Flagellar P-ring protein (Pseudomonas syringae pv. syringae (strain B728a)).